We begin with the raw amino-acid sequence, 207 residues long: Uracil phosphoribosyltransferase (207 aa).

Residues Arg77, Arg102, and Asp129 to Ser137 each bind 5-phospho-alpha-D-ribose 1-diphosphate. Uracil-binding positions include Ile192 and Gly197–Ala199. Asp198 contributes to the 5-phospho-alpha-D-ribose 1-diphosphate binding site.

The protein belongs to the UPRTase family. It depends on Mg(2+) as a cofactor.

The catalysed reaction is UMP + diphosphate = 5-phospho-alpha-D-ribose 1-diphosphate + uracil. The protein operates within pyrimidine metabolism; UMP biosynthesis via salvage pathway; UMP from uracil: step 1/1. With respect to regulation, allosterically activated by GTP. Its function is as follows. Catalyzes the conversion of uracil and 5-phospho-alpha-D-ribose 1-diphosphate (PRPP) to UMP and diphosphate. In Dictyoglomus turgidum (strain DSM 6724 / Z-1310), this protein is Uracil phosphoribosyltransferase.